A 558-amino-acid chain; its full sequence is 2-isopropylmalate synthase (558 aa).

The region spanning 30-303 is the Pyruvate carboxyltransferase domain; it reads PIWCSVDLRD…DPKLDFSNIP (274 aa). The Mg(2+) site is built by Asp39, His242, His244, and Asn278. A regulatory domain region spans residues 438-558; it reads LNNTLCVQDF…GLVSALNRII (121 aa).

It belongs to the alpha-IPM synthase/homocitrate synthase family. LeuA type 2 subfamily. In terms of assembly, homodimer. Requires Mg(2+) as cofactor.

The protein localises to the cytoplasm. It carries out the reaction 3-methyl-2-oxobutanoate + acetyl-CoA + H2O = (2S)-2-isopropylmalate + CoA + H(+). Its pathway is amino-acid biosynthesis; L-leucine biosynthesis; L-leucine from 3-methyl-2-oxobutanoate: step 1/4. Catalyzes the condensation of the acetyl group of acetyl-CoA with 3-methyl-2-oxobutanoate (2-ketoisovalerate) to form 3-carboxy-3-hydroxy-4-methylpentanoate (2-isopropylmalate). The polypeptide is 2-isopropylmalate synthase (Helicobacter hepaticus (strain ATCC 51449 / 3B1)).